We begin with the raw amino-acid sequence, 185 residues long: Intraflagellar transport protein 22 homolog (185 aa).

GTP contacts are provided by residues 10–17 (GPCESGKT), 63–67 (DCGGD), and 123–126 (HKPG).

This sequence belongs to the small GTPase superfamily. Rab family. Component of the IFT complex B, at least composed of IFT20, IFT22, IFT25, IFT27, IFT46, IFT52, TRAF3IP1/IFT54, IFT57, IFT74, IFT80, IFT81, and IFT88. Interacts with IFT88. Interacts with CFAP61.

The protein localises to the cell projection. The protein resides in the cilium. Small GTPase-like component of the intraflagellar transport (IFT) complex B. The chain is Intraflagellar transport protein 22 homolog (IFT22) from Bos taurus (Bovine).